Consider the following 114-residue polypeptide: UPF0342 protein LSEI_1724 (114 aa).

Belongs to the UPF0342 family.

The sequence is that of UPF0342 protein LSEI_1724 from Lacticaseibacillus paracasei (strain ATCC 334 / BCRC 17002 / CCUG 31169 / CIP 107868 / KCTC 3260 / NRRL B-441) (Lactobacillus paracasei).